A 42-amino-acid polypeptide reads, in one-letter code: Cytochrome b6-f complex subunit 7 (42 aa).

Residues 19–37 (AVVCFSMTLFGLSLGFGLL) form a helical membrane-spanning segment.

This sequence belongs to the PetM family. The 4 large subunits of the cytochrome b6-f complex are cytochrome b6, subunit IV (17 kDa polypeptide, PetD), cytochrome f and the Rieske protein, while the 4 small subunits are PetG, PetL, PetM and PetN. The complex functions as a dimer.

It localises to the plastid. The protein localises to the chloroplast thylakoid membrane. Functionally, component of the cytochrome b6-f complex, which mediates electron transfer between photosystem II (PSII) and photosystem I (PSI), cyclic electron flow around PSI, and state transitions. This is Cytochrome b6-f complex subunit 7 from Phaeodactylum tricornutum (strain CCAP 1055/1).